The following is a 286-amino-acid chain: MAMEGYRGFLGLLVSALLVGFLSVIFVLIWVLHFREGLGWDGGALEFNWHPVLAVTGFVFIQGIAIIVYRLPWTWKCSKFLMKSIHAGLNAVAAILAIISVVAVFDYHNVRKIPHMYSLHSWVGLTVLILYIQQLVVGFFIFLLPWAPPSLRAIVMPIHVYSGLLLFGTVIATVLMGVTEKLFFVLKNPSYHSFPPEGVFTNTLGLLILVFGALIFWIVTRPQWKRPREPGSIPLQLNGGNADGMEGAIAISSAHNMDAADAELSSEGAARKRTLGLVDTGQRSTM.

Residues 1–7 (MAMEGYR) lie on the Cytoplasmic side of the membrane. Residues 8 to 32 (GFLGLLVSALLVGFLSVIFVLIWVL) traverse the membrane as a helical segment. Residues 15-220 (SALLVGFLSV…FGALIFWIVT (206 aa)) form the Cytochrome b561 domain. Over 33–47 (HFREGLGWDGGALEF) the chain is Extracellular. Residues 48–69 (NWHPVLAVTGFVFIQGIAIIVY) form a helical membrane-spanning segment. Positions 50, 70, and 79 each coordinate heme b. Residues 70–78 (RLPWTWKCS) are Cytoplasmic-facing. Residues K79 and K83 each coordinate L-ascorbate. Residues 79-105 (KFLMKSIHAGLNAVAAILAIISVVAVF) traverse the membrane as a helical segment. Residue H86 participates in heme b binding. Over 106–118 (DYHNVRKIPHMYS) the chain is Extracellular. A Fe(3+)-binding site is contributed by H108. Residues 115–118 (HMYS) and H120 each bind heme b. Residues 119-144 (LHSWVGLTVLILYIQQLVVGFFIFLL) form a helical membrane-spanning segment. Residues 145-151 (PWAPPSL) are Cytoplasmic-facing. Position 152 (R152) interacts with L-ascorbate. Residues 152 to 179 (RAIVMPIHVYSGLLLFGTVIATVLMGVT) form a helical membrane-spanning segment. 2 residues coordinate heme b: H159 and E180. Over 180–197 (EKLFFVLKNPSYHSFPPE) the chain is Extracellular. The chain crosses the membrane as a helical span at residues 198 to 222 (GVFTNTLGLLILVFGALIFWIVTRP). The Cytoplasmic segment spans residues 223–286 (QWKRPREPGS…LVDTGQRSTM (64 aa)). K225 contacts heme b. S232 is modified (phosphoserine). The residue at position 285 (T285) is a Phosphothreonine.

In terms of assembly, homodimer. Heme b is required as a cofactor. As to expression, highly expressed in all regions of the small intestine and colon studied in suckling animals. However, after weaning, when iron absorption declines significantly, strong expression is retained only in the duodenum. Also expressed in respiratory epithelium.

It is found in the cell membrane. The protein resides in the apical cell membrane. It carries out the reaction Fe(3+)(out) + L-ascorbate(in) = monodehydro-L-ascorbate radical(in) + Fe(2+)(out) + H(+). The catalysed reaction is Cu(2+)(out) + L-ascorbate(in) = Cu(+)(out) + monodehydro-L-ascorbate radical(in) + H(+). It catalyses the reaction monodehydro-L-ascorbate radical(out) + L-ascorbate(in) = monodehydro-L-ascorbate radical(in) + L-ascorbate(out). Its function is as follows. Plasma membrane reductase that uses cytoplasmic ascorbate as an electron donor to reduce extracellular Fe(3+) into Fe(2+). Probably functions in dietary iron absorption at the brush border of duodenal enterocytes by producing Fe(2+), the divalent form of iron that can be transported into enterocytes. It is also able to reduce extracellular monodehydro-L-ascorbate and may be involved in extracellular ascorbate regeneration by erythrocytes in blood. May also act as a ferrireductase in airway epithelial cells. May also function as a cupric transmembrane reductase. The chain is Plasma membrane ascorbate-dependent reductase CYBRD1 from Rattus norvegicus (Rat).